Reading from the N-terminus, the 173-residue chain is Flavodoxin 2 (173 aa).

Residues 3 to 165 (MGLFYGSSTC…RIQSWCEQIL (163 aa)) form the Flavodoxin-like domain.

It belongs to the flavodoxin family. The cofactor is FMN.

In terms of biological role, low-potential electron donor to a number of redox enzymes. The chain is Flavodoxin 2 (fldB) from Escherichia coli O157:H7.